We begin with the raw amino-acid sequence, 125 residues long: Ribonuclease P protein component (125 aa).

It belongs to the RnpA family. In terms of assembly, consists of a catalytic RNA component (M1 or rnpB) and a protein subunit.

The catalysed reaction is Endonucleolytic cleavage of RNA, removing 5'-extranucleotides from tRNA precursor.. In terms of biological role, RNaseP catalyzes the removal of the 5'-leader sequence from pre-tRNA to produce the mature 5'-terminus. It can also cleave other RNA substrates such as 4.5S RNA. The protein component plays an auxiliary but essential role in vivo by binding to the 5'-leader sequence and broadening the substrate specificity of the ribozyme. The chain is Ribonuclease P protein component from Rhodococcus opacus (strain B4).